The chain runs to 857 residues: Dimethylglycine dehydrogenase, mitochondrial (857 aa).

Residues 1 to 43 (MLRLGALRLRGLALRSSQGRPSSAGLREGQESPPSPPEWKDRA) constitute a mitochondrion transit peptide. The disordered stretch occupies residues 15–39 (RSSQGRPSSAGLREGQESPPSPPEW). Residues 52–53 (CV), 73–74 (EK), and 80–88 (GSTWHAAGL) each bind FAD. The residue at position 84 (His-84) is a Tele-8alpha-FAD histidine. N6-acetyllysine is present on Lys-107. Lys-141 is modified (N6-acetyllysine; alternate). Residue Lys-141 is modified to N6-succinyllysine; alternate. At Lys-161 the chain carries N6-acetyllysine. Val-212 contacts FAD. Residue Lys-216 is modified to N6-acetyllysine. Trp-244 lines the FAD pocket. Lys-310 and Lys-312 each carry N6-succinyllysine. Lys-328 and Lys-353 each carry N6-acetyllysine. Position 390 to 395 (390 to 395 (FGYGII)) interacts with FAD. N6-acetyllysine; alternate occurs at positions 427, 469, and 516. N6-succinyllysine; alternate occurs at positions 427, 469, and 516. Residue 573-575 (ELT) coordinates (6S)-5,6,7,8-tetrahydrofolate. At Lys-648 the chain carries N6-acetyllysine; alternate. Lys-648 is modified (N6-succinyllysine; alternate). Residues Tyr-669, 676–678 (ELY), and Tyr-737 each bind (6S)-5,6,7,8-tetrahydrofolate. N6-acetyllysine is present on Lys-757. An N6-acetyllysine; alternate modification is found at Lys-786. Lys-786 is modified (N6-succinyllysine; alternate). Position 788 is an N6-succinyllysine (Lys-788).

It belongs to the GcvT family. FAD serves as cofactor.

The protein localises to the mitochondrion. It carries out the reaction (6S)-5,6,7,8-tetrahydrofolyl-(gamma-L-Glu)(n) + N,N-dimethylglycine + oxidized [electron-transfer flavoprotein] + H(+) = (6R)-5,10-methylenetetrahydrofolyl-(gamma-L-Glu)(n) + sarcosine + reduced [electron-transfer flavoprotein]. It participates in amine and polyamine degradation; betaine degradation; sarcosine from betaine: step 2/2. Functionally, catalyzes the demethylation of N,N-dimethylglycine to sarcosine. Also has activity with sarcosine in vitro. This Rattus norvegicus (Rat) protein is Dimethylglycine dehydrogenase, mitochondrial (Dmgdh).